The chain runs to 771 residues: Putative 8-amino-7-oxononanoate synthase 2 (771 aa).

The segment at 1–418 (MPTGLGYDFL…TVKAAELGEI (418 aa)) is unknown. Position 407 (Arg-407) interacts with substrate. Residues 419–771 (VLLGTNSYLG…EDLTPQGAAL (353 aa)) are KAPA synthase. Residue 485–486 (GY) participates in pyridoxal 5'-phosphate binding. His-510 contacts substrate. Pyridoxal 5'-phosphate contacts are provided by residues Ser-556 and 581 to 584 (DESH). N6-(pyridoxal phosphate)lysine is present on Lys-615.

In the C-terminal section; belongs to the class-II pyridoxal-phosphate-dependent aminotransferase family. BioF subfamily. Pyridoxal 5'-phosphate is required as a cofactor.

The enzyme catalyses 6-carboxyhexanoyl-[ACP] + L-alanine + H(+) = (8S)-8-amino-7-oxononanoate + holo-[ACP] + CO2. Functionally, catalyzes the decarboxylative condensation of pimeloyl-[acyl-carrier protein] and L-alanine to produce 8-amino-7-oxononanoate (AON), [acyl-carrier protein], and carbon dioxide. The sequence is that of Putative 8-amino-7-oxononanoate synthase 2 (bioF2) from Mycobacterium tuberculosis (strain CDC 1551 / Oshkosh).